The chain runs to 396 residues: NADH-quinone oxidoreductase subunit D (396 aa).

The protein belongs to the complex I 49 kDa subunit family. In terms of assembly, NDH-1 is composed of 14 different subunits. Subunits NuoB, C, D, E, F, and G constitute the peripheral sector of the complex.

The protein localises to the cell inner membrane. The enzyme catalyses a quinone + NADH + 5 H(+)(in) = a quinol + NAD(+) + 4 H(+)(out). Functionally, NDH-1 shuttles electrons from NADH, via FMN and iron-sulfur (Fe-S) centers, to quinones in the respiratory chain. The immediate electron acceptor for the enzyme in this species is believed to be ubiquinone. Couples the redox reaction to proton translocation (for every two electrons transferred, four hydrogen ions are translocated across the cytoplasmic membrane), and thus conserves the redox energy in a proton gradient. The polypeptide is NADH-quinone oxidoreductase subunit D (Orientia tsutsugamushi (strain Ikeda) (Rickettsia tsutsugamushi)).